The primary structure comprises 695 residues: MADIFDSFELLYDRPGEPMINTKGEDKVLFELTEQFLTPEYANNGLELNNRFGDEEEVSRKIILKNLDKIPEFPKAKQLPNDADFSLFLPSHQEMANEVIDVLMSVTENQLQELLSTCVYARINLNPQLFNYCYTVAIMHRRDTGKVRVQNYAEIFPAKFLDSQVFTQAREAAAVIPKTIPRTPIIIPRDYTATDLEEEHRLAYWREDLGINLHHWHWHLVYPFSASDEKIVAKDRRGELFFYMHQQIIARYNCERLCNSLKRVKKFSDWREPIPEAYYPKLDSLTSARGWPPRQAGMRWQDLKRPVDGLNVTIDDMERYRRNIEEAIATGNVILPDKSTKKLDIDMLGNMMEASVLSPNRDLYGSIHNNMHSFSAYMHDPEHRYLESFGVIADEATTMRDPFFYRVHAWVDDIFQSFKEAPHNVRPYSRSQLENPGVQVTSVAVESAGGQQNVLNTFWMQSDVNLSKGLDFSDRGPVYARFTHLNHRPFRYVIKANNTASARRTTVRIFIAPKTDERNLPWALSDQRKMFIEMDRFVVPLSAGENTITRQSTESSLTIPFEQTFRDLSIQGSDPRRSELAAFNYCGCGWPQHMLVPKGTVGGVAYQLFVMLSNYELDKIEQPDGRELSCVEASMFCGLKDKKYPDARPMGYPFDRPSNSATNIEDFSAMSNMGLQDIVIKLSDVTEPNPRNPPA.

Residues His-215, His-219, and His-245 each contribute to the Cu cation site. Residue Glu-353 is the Proton acceptor of the active site. Residues His-368, His-372, and His-408 each contribute to the Cu cation site. 2 disulfides stabilise this stretch: Cys-586–Cys-630 and Cys-588–Cys-637.

As to quaternary structure, heterodimer. Forms a complex with an interleukin 1-like protein as a consequence of a host defense response. The cofactor is Cu(2+). Post-translationally, the N-terminus is blocked. Synthesized by oenocytoids, a type of hemocyte, and released into the hemolymph plasma.

The protein resides in the secreted. The enzyme catalyses 2 L-dopa + O2 = 2 L-dopaquinone + 2 H2O. The catalysed reaction is L-tyrosine + O2 = L-dopaquinone + H2O. With respect to regulation, activated by immulectin and lipopolysaccharide. Its function is as follows. This is a copper-containing oxidase that functions in the formation of pigments such as melanins and other polyphenolic compounds. Catalyzes the rate-limiting conversions of tyrosine to DOPA, DOPA to DOPA-quinone and possibly 5,6 dihydroxyindole to indole-5'6 quinone. Binds to the surface of hemocytes and is involved in hemocyte melanization. The polypeptide is Phenoloxidase subunit 2 (Manduca sexta (Tobacco hawkmoth)).